Consider the following 74-residue polypeptide: Defensin (74 aa).

Positions 1-21 (MRGIYICLVFVLVCGLVSGLA) are cleaved as a signal peptide. The propeptide occupies 22-34 (DVPAESEMAHLRV). Disulfide bonds link Cys-40–Cys-61, Cys-47–Cys-69, and Cys-51–Cys-71.

In terms of tissue distribution, expressed in the hemocytes, fat body and ovaries.

It is found in the secreted. In terms of biological role, antibacterial peptide mostly active against Gram-positive bacteria. This Rhipicephalus microplus (Cattle tick) protein is Defensin.